Reading from the N-terminus, the 666-residue chain is Long chain acyl-CoA synthetase 4 (666 aa).

228–239 provides a ligand contact to ATP; the sequence is IMYTSGTTGDPK. Residues 495 to 519 form a fatty acid-binding region; the sequence is DGWLHTGDVGEWQPDGSMKIIDRKK.

The protein belongs to the ATP-dependent AMP-binding enzyme family. Mg(2+) serves as cofactor.

The catalysed reaction is a long-chain fatty acid + ATP + CoA = a long-chain fatty acyl-CoA + AMP + diphosphate. It functions in the pathway lipid metabolism; fatty acid metabolism. Its function is as follows. Activation of long-chain fatty acids for both synthesis of cellular lipids, and degradation via beta-oxidation. Preferentially uses palmitate, palmitoleate, oleate and linoleate. The protein is Long chain acyl-CoA synthetase 4 (LACS4) of Arabidopsis thaliana (Mouse-ear cress).